The primary structure comprises 236 residues: 2-C-methyl-D-erythritol 4-phosphate cytidylyltransferase (236 aa).

This sequence belongs to the IspD/TarI cytidylyltransferase family. IspD subfamily. Homodimer.

It carries out the reaction 2-C-methyl-D-erythritol 4-phosphate + CTP + H(+) = 4-CDP-2-C-methyl-D-erythritol + diphosphate. It functions in the pathway isoprenoid biosynthesis; isopentenyl diphosphate biosynthesis via DXP pathway; isopentenyl diphosphate from 1-deoxy-D-xylulose 5-phosphate: step 2/6. Catalyzes the formation of 4-diphosphocytidyl-2-C-methyl-D-erythritol from CTP and 2-C-methyl-D-erythritol 4-phosphate (MEP). The chain is 2-C-methyl-D-erythritol 4-phosphate cytidylyltransferase from Escherichia coli O45:K1 (strain S88 / ExPEC).